We begin with the raw amino-acid sequence, 249 residues long: Caffeoyl-CoA O-methyltransferase 1 (249 aa).

Lys-23 serves as a coordination point for substrate. Residues Thr-65, Glu-87, Gly-89–Val-90, Ser-95, Asp-113, and Ala-142 each bind S-adenosyl-L-methionine. Asp-165 contributes to the substrate binding site. Asp-165 is an a divalent metal cation binding site. Asp-167 is a binding site for S-adenosyl-L-methionine. A divalent metal cation-binding residues include Asp-191 and Asn-192. Asn-196 contacts substrate.

It belongs to the class I-like SAM-binding methyltransferase superfamily. Cation-dependent O-methyltransferase family. CCoAMT subfamily. Requires a divalent metal cation as cofactor. In terms of tissue distribution, mostly expressed in petal limbs and tubes, and, at low levels, in flower buds, stamens, pistils, stems, roots and leaves.

The protein resides in the cytoplasm. Its subcellular location is the cytosol. It catalyses the reaction (E)-caffeoyl-CoA + S-adenosyl-L-methionine = (E)-feruloyl-CoA + S-adenosyl-L-homocysteine + H(+). The catalysed reaction is (E)-5-hydroxyferuloyl-CoA + S-adenosyl-L-methionine = (E)-sinapoyl-CoA + S-adenosyl-L-homocysteine + H(+). Its pathway is aromatic compound metabolism; phenylpropanoid biosynthesis. In terms of biological role, involved in the production of floral volatile phenylpropanoids in flowers of fragrant cultivars (e.g. cv. Mitchell and cv. V26) from cinnamic acid, a common precursor with the anthocyanin biosynthesis pathway involved in flower pigmentation. Methylates caffeoyl-CoA to feruloyl-CoA, also able to methylate 5-hydroxyferuloyl-CoA. This is Caffeoyl-CoA O-methyltransferase 1 from Petunia hybrida (Petunia).